A 727-amino-acid chain; its full sequence is Catalase-peroxidase (727 aa).

Positions Trp95–Tyr218 form a cross-link, tryptophyl-tyrosyl-methioninium (Trp-Tyr) (with M-244). His96 functions as the Proton acceptor in the catalytic mechanism. Residues Tyr218–Met244 constitute a cross-link (tryptophyl-tyrosyl-methioninium (Tyr-Met) (with W-95)). His259 contributes to the heme b binding site.

Belongs to the peroxidase family. Peroxidase/catalase subfamily. Homodimer or homotetramer. Requires heme b as cofactor. Formation of the three residue Trp-Tyr-Met cross-link is important for the catalase, but not the peroxidase activity of the enzyme.

It catalyses the reaction H2O2 + AH2 = A + 2 H2O. The enzyme catalyses 2 H2O2 = O2 + 2 H2O. Its function is as follows. Bifunctional enzyme with both catalase and broad-spectrum peroxidase activity. This is Catalase-peroxidase from Persephonella marina (strain DSM 14350 / EX-H1).